The following is a 115-amino-acid chain: U17-barytoxin-Tl1b (115 aa).

An N-terminal signal peptide occupies residues 1-20 (MKTIIVFLSLLVLATKFGDA). Positions 21-74 (KEGVNQKQKKEVTQNEFREEYLNEMAAMSLVQQLEAIERALFENEAGRNSRQKR) are excised as a propeptide. 3 cysteine pairs are disulfide-bonded: Cys75/Cys89, Cys82/Cys94, and Cys88/Cys109.

This sequence belongs to the neurotoxin 14 (magi-1) family. 03 (ICK-30-40) subfamily. In terms of tissue distribution, expressed by the venom gland.

It localises to the secreted. Ion channel inhibitor. In Trittame loki (Brush-footed trapdoor spider), this protein is U17-barytoxin-Tl1b.